Here is a 448-residue protein sequence, read N- to C-terminus: N-succinylarginine dihydrolase (448 aa).

Substrate is bound by residues 19–28 (GGLSYGNVAS), Asn-110, and 137–138 (HR). Residue Glu-174 is part of the active site. Arg-214 is a substrate binding site. His-250 is an active-site residue. Residues Asp-252 and Asn-365 each coordinate substrate. Catalysis depends on Cys-371, which acts as the Nucleophile.

The protein belongs to the succinylarginine dihydrolase family. As to quaternary structure, homodimer.

The catalysed reaction is N(2)-succinyl-L-arginine + 2 H2O + 2 H(+) = N(2)-succinyl-L-ornithine + 2 NH4(+) + CO2. It functions in the pathway amino-acid degradation; L-arginine degradation via AST pathway; L-glutamate and succinate from L-arginine: step 2/5. Catalyzes the hydrolysis of N(2)-succinylarginine into N(2)-succinylornithine, ammonia and CO(2). This is N-succinylarginine dihydrolase from Ectopseudomonas mendocina (strain ymp) (Pseudomonas mendocina).